The chain runs to 391 residues: Dual-specificity RNA methyltransferase RlmN (391 aa).

Positions 1–20 (MTSVVADSLTETKTDSQKPI) are disordered. The segment covering 10–20 (TETKTDSQKPI) has biased composition (basic and acidic residues). Catalysis depends on Glu120, which acts as the Proton acceptor. Residues 126-366 (DADRGTLCIS…APVRRTRGQD (241 aa)) form the Radical SAM core domain. Residues Cys133 and Cys371 are joined by a disulfide bond. Cys140, Cys144, and Cys147 together coordinate [4Fe-4S] cluster. S-adenosyl-L-methionine contacts are provided by residues 195–196 (GE), Ser227, 249–251 (SLH), and Asn328. Cys371 acts as the S-methylcysteine intermediate in catalysis.

Belongs to the radical SAM superfamily. RlmN family. It depends on [4Fe-4S] cluster as a cofactor.

Its subcellular location is the cytoplasm. It carries out the reaction adenosine(2503) in 23S rRNA + 2 reduced [2Fe-2S]-[ferredoxin] + 2 S-adenosyl-L-methionine = 2-methyladenosine(2503) in 23S rRNA + 5'-deoxyadenosine + L-methionine + 2 oxidized [2Fe-2S]-[ferredoxin] + S-adenosyl-L-homocysteine. It catalyses the reaction adenosine(37) in tRNA + 2 reduced [2Fe-2S]-[ferredoxin] + 2 S-adenosyl-L-methionine = 2-methyladenosine(37) in tRNA + 5'-deoxyadenosine + L-methionine + 2 oxidized [2Fe-2S]-[ferredoxin] + S-adenosyl-L-homocysteine. In terms of biological role, specifically methylates position 2 of adenine 2503 in 23S rRNA and position 2 of adenine 37 in tRNAs. m2A2503 modification seems to play a crucial role in the proofreading step occurring at the peptidyl transferase center and thus would serve to optimize ribosomal fidelity. The protein is Dual-specificity RNA methyltransferase RlmN of Zymomonas mobilis subsp. mobilis (strain ATCC 31821 / ZM4 / CP4).